Here is a 325-residue protein sequence, read N- to C-terminus: Probable 4-hydroxy-tetrahydrodipicolinate reductase 2, chloroplastic (325 aa).

A chloroplast-targeting transit peptide spans 1 to 32 (MLSLRPPCTLSPAPWRRRRTLHGAAGTPQRVS). NAD(+) contacts are provided by residues 57-62 (GCTGKM), 149-151 (GTT), and 172-175 (SPQM). His-208 functions as the Proton donor/acceptor in the catalytic mechanism. Catalysis depends on Lys-212, which acts as the Proton donor. (S)-2,3,4,5-tetrahydrodipicolinate is bound at residue 217–218 (GT).

This sequence belongs to the DapB family.

The protein resides in the plastid. It localises to the chloroplast. It catalyses the reaction (S)-2,3,4,5-tetrahydrodipicolinate + NAD(+) + H2O = (2S,4S)-4-hydroxy-2,3,4,5-tetrahydrodipicolinate + NADH + H(+). The catalysed reaction is (S)-2,3,4,5-tetrahydrodipicolinate + NADP(+) + H2O = (2S,4S)-4-hydroxy-2,3,4,5-tetrahydrodipicolinate + NADPH + H(+). Its pathway is amino-acid biosynthesis; L-lysine biosynthesis via DAP pathway; (S)-tetrahydrodipicolinate from L-aspartate: step 4/4. Its function is as follows. Catalyzes the conversion of 4-hydroxy-tetrahydrodipicolinate (HTPA) to tetrahydrodipicolinate. In Oryza sativa subsp. japonica (Rice), this protein is Probable 4-hydroxy-tetrahydrodipicolinate reductase 2, chloroplastic (DAPB2).